Reading from the N-terminus, the 674-residue chain is YAP1-binding protein 1 (674 aa).

The protein belongs to the YBP1 family. In terms of assembly, interacts with YAP1. Forms a peroxide stress induced complex with YAP1 in the cytoplasm. Systematic proteome-wide 2-hybrid interaction studies suggest that YAP1, HYR1/GPX3, and YBP1 all interact with the nuclear pore complex subunit NUP116, which is involved in nucleocytoplasmic transport.

The protein resides in the cytoplasm. Functionally, involved in oxidative stress response and redox homeostasis. Required for hydrogen peroxide-induced oxidation and nuclear localization (activation) of YAP1. Functions probably in concert with HYP1/GPX3, the actual YAP1 modifying enzyme. YBP1 is not required for HYP1/GPX3-independent, diamide-induced oxidation of YAP1. The sequence is that of YAP1-binding protein 1 from Saccharomyces cerevisiae (strain ATCC 204508 / S288c) (Baker's yeast).